Consider the following 65-residue polypeptide: Large ribosomal subunit protein bL35 (65 aa).

A disordered region spans residues 1–29 (MPKMKTHSGAKKRFKLTGSGKVKRQQANR).

This sequence belongs to the bacterial ribosomal protein bL35 family.

The protein is Large ribosomal subunit protein bL35 of Kocuria rhizophila (strain ATCC 9341 / DSM 348 / NBRC 103217 / DC2201).